A 431-amino-acid chain; its full sequence is RNA-binding motif, single-stranded-interacting protein 3 (431 aa).

Residues 28–53 (YAPAPHPMAPPSPSTNSSSNSSGEQL) form a disordered region. The span at 31 to 40 (APHPMAPPSP) shows a compositional bias: pro residues. 2 RRM domains span residues 56 to 129 (TNLY…MAKQ) and 135 to 220 (TNLY…FADG). 2 disordered regions span residues 220 to 242 (GGQKKRQGQSKHTQNGRPWPREG) and 393 to 431 (TSPQTVAPSSQDSSGQQQQLAVDTPSEHAPAYSFQQSKP). Low complexity predominate over residues 401–411 (SSQDSSGQQQQ).

The protein localises to the cytoplasm. Its function is as follows. Binds poly(A) and poly(U) oligoribonucleotides. The sequence is that of RNA-binding motif, single-stranded-interacting protein 3 (Rbms3) from Mus musculus (Mouse).